Here is a 395-residue protein sequence, read N- to C-terminus: MLLERVRTGTQKSSDMCGYTGSPEIPQCAGCNQHIVDRFILKVLDRHWHSKCLKCNDCQIQLAEKCFSRGDSVYCKDDFFKRFGTKCAACQQGIPPTQVVRRAQEFVYHLHCFACIVCKRQLATGDEFYLMEDSRLVCKADYETAKQREAESTAKRPRTTITAKQLETLKNAYNNSPKPARHVREQLSSETGLDMRVVQVWFQNRRAKEKRLKKDAGRQRWGQYFRNMKRSRGNSKSDKDSIQEEGPDSDAEVSFTDEPSMSEMNHSNGIYNSLNDSSPVLGRQAGSNGPFSLEHGGIPTQDQYHNLRSNSPYGIPQSPASLQSMPGHQSLLSNLAFPDTGLGIIGQGGQGVAPTMRVIGVNGPSSDLSTGSSGGYPDFPVSPASWLDEVDHTQF.

LIM zinc-binding domains are found at residues cysteine 28–aspartate 78 and cysteine 87–aspartate 141. Positions alanine 154–lysine 213 form a DNA-binding region, homeobox. Disordered regions lie at residues lysine 208–tyrosine 304 and glycine 363–proline 383. Residues aspartate 257–serine 278 show a composition bias toward polar residues.

Interacts with ldb1 and with the N-terminus of rnf12. As to expression, in dorsal regions at neural tube and tailbud stages and in adults predominantly in the pituitary gland and weakly in the eye and brain.

The protein resides in the nucleus. Transcription factor. May be involved in the specification and maintenance of differentiation of distinct neuronal and neuroendocrine tissues. Early marker for the pituitary and pineal lineages, it may be involved in specifying these lineages. This chain is LIM/homeobox protein Lhx3 (lhx3), found in Xenopus laevis (African clawed frog).